A 90-amino-acid polypeptide reads, in one-letter code: Small ribosomal subunit protein uS15 (90 aa).

It belongs to the universal ribosomal protein uS15 family. Part of the 30S ribosomal subunit. Forms a bridge to the 50S subunit in the 70S ribosome, contacting the 23S rRNA.

One of the primary rRNA binding proteins, it binds directly to 16S rRNA where it helps nucleate assembly of the platform of the 30S subunit by binding and bridging several RNA helices of the 16S rRNA. Functionally, forms an intersubunit bridge (bridge B4) with the 23S rRNA of the 50S subunit in the ribosome. This Campylobacter concisus (strain 13826) protein is Small ribosomal subunit protein uS15.